The sequence spans 203 residues: Guanylate kinase (203 aa).

Positions 5–184 constitute a Guanylate kinase-like domain; sequence GMLIVLSGPS…AVQRIEKIIE (180 aa). 12-19 lines the ATP pocket; it reads GPSGVGKG.

Belongs to the guanylate kinase family.

The protein localises to the cytoplasm. It carries out the reaction GMP + ATP = GDP + ADP. Functionally, essential for recycling GMP and indirectly, cGMP. The polypeptide is Guanylate kinase (Latilactobacillus sakei subsp. sakei (strain 23K) (Lactobacillus sakei subsp. sakei)).